The chain runs to 96 residues: Small ribosomal subunit protein bS6 (96 aa).

This sequence belongs to the bacterial ribosomal protein bS6 family.

In terms of biological role, binds together with bS18 to 16S ribosomal RNA. The polypeptide is Small ribosomal subunit protein bS6 (Streptococcus thermophilus (strain ATCC BAA-250 / LMG 18311)).